The primary structure comprises 61 residues: MDSRLLEIIACPRCQGRLQLDKENERLICRFEHIAFPIVQGIPVLLVEEAVSLAEDPKDIT.

It belongs to the UPF0434 family.

The sequence is that of UPF0434 protein MS0934 from Mannheimia succiniciproducens (strain KCTC 0769BP / MBEL55E).